The chain runs to 66 residues: Large ribosomal subunit protein bL32 (66 aa).

The protein belongs to the bacterial ribosomal protein bL32 family.

This Rickettsia conorii (strain ATCC VR-613 / Malish 7) protein is Large ribosomal subunit protein bL32.